Reading from the N-terminus, the 291-residue chain is Pentonolactonase XacC (291 aa).

Residues glutamate 15, asparagine 141, and aspartate 191 each contribute to the a divalent metal cation site. Aspartate 191 functions as the Proton donor/acceptor in the catalytic mechanism.

The protein belongs to the SMP-30/CGR1 family. As to quaternary structure, monomer. Requires a divalent metal cation as cofactor.

The enzyme catalyses L-arabinono-1,4-lactone + H2O = L-arabinonate + H(+). It carries out the reaction D-xylono-1,4-lactone + H2O = D-xylonate + H(+). It functions in the pathway carbohydrate degradation. Its function is as follows. Pentonolactonase involved in D-arabinose and D-xylose catabolism. Catalyzes the hydrolysis of both L-arabino-gamma-lactone and D-xylono-gamma-lactone to the corresponding acids. Can also hydrolyze D-galactono-gamma-lactone and D-glucono-delta-lactone. The protein is Pentonolactonase XacC of Haloferax volcanii (strain ATCC 29605 / DSM 3757 / JCM 8879 / NBRC 14742 / NCIMB 2012 / VKM B-1768 / DS2) (Halobacterium volcanii).